Here is a 408-residue protein sequence, read N- to C-terminus: LL-diaminopimelate aminotransferase (408 aa).

Substrate contacts are provided by Tyr-15 and Gly-42. Pyridoxal 5'-phosphate is bound by residues Tyr-72, Ser-108–Lys-109, Tyr-132, Asn-187, Tyr-218, and Ser-246–Ser-248. Substrate is bound by residues Lys-109, Tyr-132, and Asn-187. Position 249 is an N6-(pyridoxal phosphate)lysine (Lys-249). Arg-257 and Asn-292 together coordinate pyridoxal 5'-phosphate. Substrate contacts are provided by Asn-292 and Arg-388.

The protein belongs to the class-I pyridoxal-phosphate-dependent aminotransferase family. LL-diaminopimelate aminotransferase subfamily. Homodimer. Requires pyridoxal 5'-phosphate as cofactor.

It carries out the reaction (2S,6S)-2,6-diaminopimelate + 2-oxoglutarate = (S)-2,3,4,5-tetrahydrodipicolinate + L-glutamate + H2O + H(+). Its pathway is amino-acid biosynthesis; L-lysine biosynthesis via DAP pathway; LL-2,6-diaminopimelate from (S)-tetrahydrodipicolinate (aminotransferase route): step 1/1. Involved in the synthesis of meso-diaminopimelate (m-DAP or DL-DAP), required for both lysine and peptidoglycan biosynthesis. Catalyzes the direct conversion of tetrahydrodipicolinate to LL-diaminopimelate. Is also able to catalyze the reverse reaction in vitro, i.e. the transamination of LL-diaminopimelate with 2-oxoglutarate to produce tetrahydrodipicolinate and glutamate. Cannot use m-DAP, lysine or ornithine as the amino-group donor, when using 2-oxoglutarate as the amino-group acceptor. Cannot use pyruvate, indole 3-pyruvate, oxaloacetate or phenyl pyruvate as the amino-group acceptor, when using LL-DAP as the amino-group donor. This chain is LL-diaminopimelate aminotransferase, found in Leptospira interrogans serogroup Icterohaemorrhagiae serovar copenhageni (strain Fiocruz L1-130).